A 121-amino-acid polypeptide reads, in one-letter code: Phospholipase A2 homolog EPL_00195 (121 aa).

7 disulfide bridges follow: Cys25/Cys114, Cys27/Cys43, Cys42/Cys94, Cys48/Cys121, Cys49/Cys87, Cys56/Cys80, and Cys74/Cys85. Residues 104-116 (KKYRIYPNFLCRG) are important for membrane-damaging activities in eukaryotes and bacteria; heparin-binding.

Belongs to the phospholipase A2 family. Group II subfamily. S49 sub-subfamily. As to quaternary structure, monomer. In terms of tissue distribution, expressed by the venom gland.

It is found in the secreted. In terms of biological role, snake venom phospholipase A2 homolog that lacks enzymatic activity. Shows high myotoxin activities and displays edema-inducing activities. Has cytotoxic activities against HUVEC cells (LC(50)=2.5 uL) and human lung adenocarcinoma A549 cells (LC(50)=2.9 uL). The chain is Phospholipase A2 homolog EPL_00195 from Echis pyramidum leakeyi (Leakey's carpet viper).